The following is a 585-amino-acid chain: Proline--tRNA ligase (585 aa).

Belongs to the class-II aminoacyl-tRNA synthetase family. ProS type 1 subfamily. Homodimer.

It localises to the cytoplasm. The enzyme catalyses tRNA(Pro) + L-proline + ATP = L-prolyl-tRNA(Pro) + AMP + diphosphate. In terms of biological role, catalyzes the attachment of proline to tRNA(Pro) in a two-step reaction: proline is first activated by ATP to form Pro-AMP and then transferred to the acceptor end of tRNA(Pro). As ProRS can inadvertently accommodate and process non-cognate amino acids such as alanine and cysteine, to avoid such errors it has two additional distinct editing activities against alanine. One activity is designated as 'pretransfer' editing and involves the tRNA(Pro)-independent hydrolysis of activated Ala-AMP. The other activity is designated 'posttransfer' editing and involves deacylation of mischarged Ala-tRNA(Pro). The misacylated Cys-tRNA(Pro) is not edited by ProRS. The polypeptide is Proline--tRNA ligase (Mycolicibacterium vanbaalenii (strain DSM 7251 / JCM 13017 / BCRC 16820 / KCTC 9966 / NRRL B-24157 / PYR-1) (Mycobacterium vanbaalenii)).